The chain runs to 96 residues: Small ribosomal subunit protein bS6 (96 aa).

Belongs to the bacterial ribosomal protein bS6 family.

In terms of biological role, binds together with bS18 to 16S ribosomal RNA. This is Small ribosomal subunit protein bS6 from Mycolicibacterium paratuberculosis (strain ATCC BAA-968 / K-10) (Mycobacterium paratuberculosis).